The following is a 339-amino-acid chain: Adenylosuccinate synthetase (339 aa).

GTP is bound by residues 12 to 18 and 42 to 44; these read GDEGKGS and GHS. The active-site Proton acceptor is Asp-13. 2 residues coordinate Mg(2+): Asp-13 and Gly-42. Residues 13 to 16, 40 to 43, Thr-127, Arg-141, Gln-179, Thr-194, and Arg-256 contribute to the IMP site; these read DEGK and NAGH. The active-site Proton donor is His-43. 252-258 contacts substrate; it reads TVTGRRR. GTP-binding positions include Arg-258, 284-286, and 324-326; these read MLD and KTG.

It belongs to the adenylosuccinate synthetase family. As to quaternary structure, homodimer. The cofactor is Mg(2+).

It is found in the cytoplasm. It catalyses the reaction IMP + L-aspartate + GTP = N(6)-(1,2-dicarboxyethyl)-AMP + GDP + phosphate + 2 H(+). The protein operates within purine metabolism; AMP biosynthesis via de novo pathway; AMP from IMP: step 1/2. In terms of biological role, plays an important role in the de novo pathway of purine nucleotide biosynthesis. Catalyzes the first committed step in the biosynthesis of AMP from IMP. The polypeptide is Adenylosuccinate synthetase (Pyrococcus sp. (strain ST700)).